The primary structure comprises 374 residues: WAT1-related protein At2g39510 (374 aa).

The next 10 helical transmembrane spans lie at 9-29 (FITV…AKFA), 38-58 (VLAS…AYFL), 64-84 (PKMT…EPTI), 99-119 (TFTA…AWIF), 135-155 (ILGT…KGPL), 182-202 (GASL…LQAI), 212-232 (SLTA…ALFI), 249-269 (LAAV…QGVI), 284-304 (LSMV…MFLG), and 306-326 (ILGA…KSKD). EamA domains are found at residues 19-147 (YAGL…GAML) and 191-320 (ICWA…YSVL). A disordered region spans residues 350–374 (SKANAKMDTNDASVVISRPNTNESV).

This sequence belongs to the drug/metabolite transporter (DMT) superfamily. Plant drug/metabolite exporter (P-DME) (TC 2.A.7.4) family.

Its subcellular location is the membrane. The protein is WAT1-related protein At2g39510 of Arabidopsis thaliana (Mouse-ear cress).